We begin with the raw amino-acid sequence, 127 residues long: Small ribosomal subunit protein uS11c (127 aa).

It belongs to the universal ribosomal protein uS11 family. In terms of assembly, part of the 30S ribosomal subunit.

The protein localises to the plastid. It localises to the chloroplast. The protein is Small ribosomal subunit protein uS11c of Heterosigma akashiwo (strain NIES-293 / 8280G21-1).